Consider the following 491-residue polypeptide: Sodium-dependent glucose transporter 1 (491 aa).

11 helical membrane passes run Phe-26–Phe-46, His-52–Cys-72, Val-81–Leu-101, Phe-119–Leu-139, Leu-165–Phe-185, Ala-210–Gly-230, Leu-255–Tyr-275, Gly-277–Phe-297, Leu-303–Phe-323, Ser-338–Leu-358, and Phe-365–Val-385. 2 disordered regions span residues Ala-397–Gln-425 and Asn-438–Asp-491. A compositionally biased stretch (acidic residues) spans Met-416–Gln-425. Polar residues predominate over residues Gln-440–Pro-458.

Belongs to the major facilitator superfamily.

It localises to the apical cell membrane. In terms of biological role, may function as a sodium-dependent glucose transporter. Potential channels for urea in the inner medulla of kidney. This chain is Sodium-dependent glucose transporter 1 (mfsd4b), found in Xenopus laevis (African clawed frog).